The sequence spans 230 residues: Ribulose-phosphate 3-epimerase (230 aa).

A substrate-binding site is contributed by S10. 3 residues coordinate a divalent metal cation: H35, D37, and H68. D37 functions as the Proton acceptor in the catalytic mechanism. Substrate is bound by residues H68, 146 to 149, 179 to 181, and 201 to 202; these read GFGG, DGG, and GS. D179 lines the a divalent metal cation pocket. The active-site Proton donor is D179.

This sequence belongs to the ribulose-phosphate 3-epimerase family. Homohexamer. Requires a divalent metal cation as cofactor.

The enzyme catalyses D-ribulose 5-phosphate = D-xylulose 5-phosphate. The protein operates within carbohydrate degradation. Its function is as follows. Catalyzes the reversible epimerization of D-ribulose 5-phosphate to D-xylulose 5-phosphate. This chain is Ribulose-phosphate 3-epimerase, found in Synechocystis sp. (strain ATCC 27184 / PCC 6803 / Kazusa).